Reading from the N-terminus, the 1294-residue chain is RKFIIANARVENCAVIYCNDGFCELCGYSRAEVMQRPCTCDFLHGPRTQRRAAAQIAQALLGAEERKVEIAFYRKDGSCFLCLVDVVPVKNEDGAVIMFILNFEVVMEKDMVGSPARDTNHRGPPTSWLTPGRAKTFRLKLPALLALTTRESSSVRPGGTGGSGAPGAVVVDVDLTPAAPSSESLALDEVSALDNHVAGPAEERRALVAPGSPPSSVPGPPHTSPRAHSLNPDASGSSCSLARTRSRESCASVRRASSADDIEAMRAGALPPPPRHASTGAMHPLRSGLLNSTSDSDLVRYRTISKIPQITLNFVDLKGDPFLASPTSDREIIAPKIKERTHNVTEKVTQVLSLGADVLPEYKLQAPRIHRWTILHYSPFKAVWDWLILLLVIYTAVFTPYSAAFLLKEPEEDAQTADCGYACQPLAVVDLIVDIMFIVDILINFRTTYVNANEEVVSHPGRIAVHYFKGWFLIDMVAAIPFDLLIFGSGSEELIGLLKTARLLRLVRVARKLDRYSEYGAAVLFLLMCTFALIAHWLACIWYAIGNMEQPDMNSRIGWLHNLGDQIGKPYNSSGLGGPSIKDKYVTALYFTFSSLTSVGFGNVSPNTNSEKIFSICVMLIGSLMYASIFGNVSAIIQRLYSGTARYHTQMLRVREFIRFHQIPNPLRQRLEEYFQHAWSYTNGIDMNAVLKGFPECLQADICLHLNRSLLQHCKPFRGATKGCLRALAMKFKTTHAPPGDTLVHAGDLLTALYFISRGSIEILRGDVVVAILGKNDIFGEPLNLYARPGKSNGDVRALTYCDLHKIHRDDLLEVLDMYPEFSDHFWSSLEITFNLRDTNMIPGSPGSTELEGGFNRQRRRKLSFRRRTDKDPEQPGEVPALGPARVGAGPSSWGRPGTPWGDSPSSGPSSPESSEDEGQGRSSSPLRLVPFSSPRPPGEPRGAETLTEDGDKSDTCNPLSGAFSGVSNIFSFWGDSRGRQYQELPRCPAPAPSLLNIPLSSPGRRPRGDVESRLDALQRQLNRLETRLSADMATVLQLLQRQMTLVPPAYSAVTTPGPGPASTSPLLPISPIPTLTLDSLSQVSQFVAFEELPPGAPELPQDGPTRRLSLPGQLGALTSQPLHRHGSDPGSAVWDWLILLLVIYTAVFTPYSAAFLLKEPEEDAQTADCGYACQPLAVVDLIVDIMFIVDILINFRTTYVNANEEVVSHPGRIAVHYFKGWFLIDMVAAIPFDLLIFGSGSEELIGLLKTARLLRLVRVARKLDRYSEYGAAVLFLLMCTFALIAHWLACIWY.

At 1-377 the chain is on the cytoplasmic side; that stretch reads RKFIIANARV…RIHRWTILHY (377 aa). A PAS domain is found at 15–44; that stretch reads VIYCNDGFCELCGYSRAEVMQRPCTCDFLH. The PAC domain maps to 66–118; it reads RKVEIAFYRKDGSCFLCLVDVVPVKNEDGAVIMFILNFEVVMEKDMVGSPARD. Positions 207–258 are disordered; the sequence is LVAPGSPPSSVPGPPHTSPRAHSLNPDASGSSCSLARTRSRESCASVRRASS. A compositionally biased stretch (pro residues) spans 211–223; sequence GSPPSSVPGPPHT. 2 positions are modified to phosphoserine: Ser212 and Ser216. Residues 232 to 243 are compositionally biased toward polar residues; it reads PDASGSSCSLAR. 4 positions are modified to phosphoserine: Ser257, Ser258, Ser294, and Ser325. A helical transmembrane segment spans residues 378–398; the sequence is SPFKAVWDWLILLLVIYTAVF. Over 399–424 the chain is Extracellular; that stretch reads TPYSAAFLLKEPEEDAQTADCGYACQ. Residues 425-445 form a helical membrane-spanning segment; it reads PLAVVDLIVDIMFIVDILINF. Residues 446–469 lie on the Cytoplasmic side of the membrane; it reads RTTYVNANEEVVSHPGRIAVHYFK. A helical membrane pass occupies residues 470–490; that stretch reads GWFLIDMVAAIPFDLLIFGSG. The Extracellular portion of the chain corresponds to 491 to 494; that stretch reads SEEL. Residues 495–515 traverse the membrane as a helical; Voltage-sensor segment; it reads IGLLKTARLLRLVRVARKLDR. Residues 516 to 521 are Cytoplasmic-facing; it reads YSEYGA. The chain crosses the membrane as a helical span at residues 522–542; the sequence is AVLFLLMCTFALIAHWLACIW. The Extracellular portion of the chain corresponds to 543–585; it reads YAIGNMEQPDMNSRIGWLHNLGDQIGKPYNSSGLGGPSIKDKY. Residues 586-606 constitute an intramembrane region (pore-forming); the sequence is VTALYFTFSSLTSVGFGNVSP. Positions 598–603 match the Selectivity filter motif; that stretch reads SVGFGN. Topologically, residues 607–612 are extracellular; the sequence is NTNSEK. The helical transmembrane segment at 613–633 threads the bilayer; it reads IFSICVMLIGSLMYASIFGNV. The Cytoplasmic portion of the chain corresponds to 634–1294; it reads SAIIQRLYSG…IAHWLACIWY (661 aa). A cNMP-binding domain region spans residues 716–816; that stretch reads PFRGATKGCL…IHRDDLLEVL (101 aa). The disordered stretch occupies residues 844-956; sequence GSPGSTELEG…LTEDGDKSDT (113 aa). Phosphoserine occurs at positions 845 and 848. A compositionally biased stretch (basic residues) spans 857–866; sequence RQRRRKLSFR. Low complexity predominate over residues 902–913; sequence GDSPSSGPSSPE. Arg987 bears the Omega-N-methylarginine mark. The stretch at 1008–1035 forms a coiled coil; that stretch reads RGDVESRLDALQRQLNRLETRLSADMAT. A Phosphoserine modification is found at Ser1110.

It belongs to the potassium channel family. H (Eag) (TC 1.A.1.20) subfamily. Kv11.1/KCNH2 sub-subfamily. As to quaternary structure, the potassium channel is probably composed of a homo- or heterotetrameric complex of pore-forming alpha subunits that can associate with modulating beta subunits. Interacts with DNAJB12 and DNAJB14; chaperones DNAJB12 and DNAJB14 promote tetramerization. Heteromultimer with KCNH6/ERG2 and KCNH7/ERG3. Interacts with ALG10B. Forms a stable complex with KCNE1 or KCNE2, and that this heteromultimerization regulates Inward rectifier potassium channel activity. Interacts with CANX. The core-glycosylated, but not the fully glycosylated form interacts with RNF207. Interacts with NDFIP1 and NDFIP2; this interaction decreases the cell membrane expression by targeting KCNH2, through interaction with NEDD4L, for the degradation through the multivesicular bodies (MVBs)-lysosomal pathway. In terms of processing, phosphorylated on serine and threonine residues. Phosphorylation by PKA inhibits ion conduction. Highly expressed in heart and brain.

The protein localises to the cell membrane. It carries out the reaction K(+)(in) = K(+)(out). Pore-forming (alpha) subunit of voltage-gated inwardly rectifying potassium channel. Characterized by unusual gating kinetics by producing relatively small outward currents during membrane depolarization and large inward currents during subsequent repolarization which reflect a rapid inactivation during depolarization and quick recovery from inactivation but slow deactivation (closing) during repolarization. Channel properties are modulated by cAMP and subunit assembly. Forms a stable complex with KCNE1 or KCNE2, and that this heteromultimerization regulates inward rectifier potassium channel activity. This is Voltage-gated inwardly rectifying potassium channel KCNH2 from Cavia porcellus (Guinea pig).